The primary structure comprises 904 residues: Protein translocase subunit SecA (904 aa).

ATP contacts are provided by residues Gln89, 107 to 111, and Asp502; that span reads GEGKT. The Zn(2+) site is built by Cys888, Cys890, Cys899, and His900.

The protein belongs to the SecA family. Monomer and homodimer. Part of the essential Sec protein translocation apparatus which comprises SecA, SecYEG and auxiliary proteins SecDF-YajC and YidC. Zn(2+) is required as a cofactor.

The protein resides in the cell inner membrane. The protein localises to the cytoplasm. It catalyses the reaction ATP + H2O + cellular proteinSide 1 = ADP + phosphate + cellular proteinSide 2.. Functionally, part of the Sec protein translocase complex. Interacts with the SecYEG preprotein conducting channel. Has a central role in coupling the hydrolysis of ATP to the transfer of proteins into and across the cell membrane, serving both as a receptor for the preprotein-SecB complex and as an ATP-driven molecular motor driving the stepwise translocation of polypeptide chains across the membrane. The polypeptide is Protein translocase subunit SecA (Roseobacter denitrificans (strain ATCC 33942 / OCh 114) (Erythrobacter sp. (strain OCh 114))).